We begin with the raw amino-acid sequence, 405 residues long: Potassium channel subfamily K member 13 (405 aa).

The Cytoplasmic segment spans residues 1–19 (MAGRGCGCSPGHLNEDNAR). Residues 20–40 (FLLLAGLILLYLLGGAAVFSA) traverse the membrane as a helical segment. N-linked (GlcNAc...) asparagine glycosylation is found at asparagine 59 and asparagine 65. An intramembrane region (pore-forming) is located at residues 95 to 115 (WDFTGAFYFVGTVVSTIGFGM). Threonine 110, isoleucine 111, and glycine 112 together coordinate K(+). A selectivity filter 1 region spans residues 110 to 115 (TIGFGM). A helical transmembrane segment spans residues 125–145 (IFLIFYGLIGCASTILFFNLF). Topologically, residues 146-193 (LERLITVIACVMRSCHQQQLRRRGAVTQDNMKAPEKGEADSLTGWKPS) are cytoplasmic. Residues 194–214 (VYYVMLILCLASVAISCGASA) traverse the membrane as a helical segment. Positions 224–244 (YFDSVYFCFVAFSTIGFGDLV) form an intramembrane region, pore-forming. 4 residues coordinate K(+): threonine 237, isoleucine 238, glycine 239, and phenylalanine 240. Residues 237–242 (TIGFGD) form a selectivity filter 2 region. A helical membrane pass occupies residues 263–283 (FLILMGVCCIYSLFNVISILI). Topologically, residues 284–405 (KQTVNWILRK…NRLAETSGDR (122 aa)) are cytoplasmic.

It belongs to the two pore domain potassium channel (TC 1.A.1.8) family. Homodimer. Heterodimer with KCNK12.

Its subcellular location is the cell membrane. It carries out the reaction K(+)(in) = K(+)(out). Functionally, k(+) channel that conducts outward rectifying tonic currents potentiated by purinergic signals. Homo- and heterodimerizes to form functional channels with distinct regulatory and gating properties. Contributes most of K(+) currents at the plasma membrane of resting microglia. Maintains a depolarized membrane potential required for proper ramified microglia morphology and phagocytosis, selectively mediating microglial pruning of presynaptic compartments at hippocampal excitatory synapses. Upon local release of ATP caused by neuronal injury or infection, it is potentiated by P2RY12 and P2RX7 receptor signaling and contributes to ATP-triggered K(+) efflux underlying microglial NLRP3 inflammasome assembly and IL1B release. This chain is Potassium channel subfamily K member 13, found in Mus musculus (Mouse).